A 56-amino-acid chain; its full sequence is uncharacterized protein (56 aa).

The next 2 helical transmembrane spans lie at 6–26 (VILL…LLNG) and 29–49 (VDFL…FVVV).

Its subcellular location is the cell membrane. This is an uncharacterized protein from Bacillus subtilis (strain 168).